The following is a 317-amino-acid chain: Malate dehydrogenase (317 aa).

NAD(+) contacts are provided by residues 7-13 (GAAGGIG) and D34. Substrate-binding residues include R81 and R87. Residues N94 and 117–119 (VTN) each bind NAD(+). Residues N119 and R153 each contribute to the substrate site. H177 functions as the Proton acceptor in the catalytic mechanism. NAD(+) is bound at residue M231.

This sequence belongs to the LDH/MDH superfamily. MDH type 1 family. In terms of assembly, homodimer.

It catalyses the reaction (S)-malate + NAD(+) = oxaloacetate + NADH + H(+). Catalyzes the reversible oxidation of malate to oxaloacetate. The polypeptide is Malate dehydrogenase (Actinobacillus pleuropneumoniae serotype 7 (strain AP76)).